Here is a 162-residue protein sequence, read N- to C-terminus: Putative 4-hydroxy-4-methyl-2-oxoglutarate aldolase (162 aa).

Residues 75–78 (GDML) and R97 contribute to the substrate site. Position 98 (D98) interacts with a divalent metal cation.

It belongs to the class II aldolase/RraA-like family. Homotrimer. A divalent metal cation serves as cofactor.

The catalysed reaction is 4-hydroxy-4-methyl-2-oxoglutarate = 2 pyruvate. It catalyses the reaction oxaloacetate + H(+) = pyruvate + CO2. Catalyzes the aldol cleavage of 4-hydroxy-4-methyl-2-oxoglutarate (HMG) into 2 molecules of pyruvate. Also contains a secondary oxaloacetate (OAA) decarboxylase activity due to the common pyruvate enolate transition state formed following C-C bond cleavage in the retro-aldol and decarboxylation reactions. In Stutzerimonas stutzeri (strain A1501) (Pseudomonas stutzeri), this protein is Putative 4-hydroxy-4-methyl-2-oxoglutarate aldolase.